We begin with the raw amino-acid sequence, 130 residues long: Organ-specific protein P4 (130 aa).

Tandem repeats lie at residues 60 to 85 and 86 to 111. Positions 60–111 are 2 X 26 AA tandem repeats; it reads HAKENKGAIGEFEPCPNASAYGDNEIHANENKGAIGEFETRPNGSAYGDNEI. A disordered region spans residues 79–130; sequence AYGDNEIHANENKGAIGEFETRPNGSAYGDNEIGAEFTDDFEPRPSMTKYNA.

To organ specific protein S2. Expressed in pods.

This chain is Organ-specific protein P4, found in Pisum sativum (Garden pea).